The chain runs to 194 residues: Probable nicotinate-nucleotide adenylyltransferase (194 aa).

Belongs to the NadD family.

It catalyses the reaction nicotinate beta-D-ribonucleotide + ATP + H(+) = deamido-NAD(+) + diphosphate. The protein operates within cofactor biosynthesis; NAD(+) biosynthesis; deamido-NAD(+) from nicotinate D-ribonucleotide: step 1/1. Its function is as follows. Catalyzes the reversible adenylation of nicotinate mononucleotide (NaMN) to nicotinic acid adenine dinucleotide (NaAD). The sequence is that of Probable nicotinate-nucleotide adenylyltransferase from Brucella suis biovar 1 (strain 1330).